The following is a 354-amino-acid chain: Methylthioribose-1-phosphate isomerase (354 aa).

Aspartate 246 acts as the Proton donor in catalysis.

Belongs to the eIF-2B alpha/beta/delta subunits family. MtnA subfamily.

It localises to the cytoplasm. It is found in the nucleus. The catalysed reaction is 5-(methylsulfanyl)-alpha-D-ribose 1-phosphate = 5-(methylsulfanyl)-D-ribulose 1-phosphate. It functions in the pathway amino-acid biosynthesis; L-methionine biosynthesis via salvage pathway; L-methionine from S-methyl-5-thio-alpha-D-ribose 1-phosphate: step 1/6. In terms of biological role, catalyzes the interconversion of methylthioribose-1-phosphate (MTR-1-P) into methylthioribulose-1-phosphate (MTRu-1-P). This Xenopus tropicalis (Western clawed frog) protein is Methylthioribose-1-phosphate isomerase (mri1).